Consider the following 150-residue polypeptide: Transcription antitermination protein NusB (150 aa).

This sequence belongs to the NusB family.

Functionally, involved in transcription antitermination. Required for transcription of ribosomal RNA (rRNA) genes. Binds specifically to the boxA antiterminator sequence of the ribosomal RNA (rrn) operons. The protein is Transcription antitermination protein NusB of Chloroflexus aggregans (strain MD-66 / DSM 9485).